We begin with the raw amino-acid sequence, 156 residues long: Transcription antitermination protein NusB (156 aa).

The protein belongs to the NusB family.

Involved in transcription antitermination. Required for transcription of ribosomal RNA (rRNA) genes. Binds specifically to the boxA antiterminator sequence of the ribosomal RNA (rrn) operons. In Mycobacterium tuberculosis (strain CDC 1551 / Oshkosh), this protein is Transcription antitermination protein NusB.